The following is a 310-amino-acid chain: Carbamate kinase-like protein YqeA (310 aa).

This sequence belongs to the carbamate kinase family.

In Escherichia coli (strain K12), this protein is Carbamate kinase-like protein YqeA (yqeA).